A 357-amino-acid chain; its full sequence is Histidine biosynthesis bifunctional protein HisB (357 aa).

Positions 1–167 are histidinol-phosphatase; the sequence is MNDKILFIDR…IHKYLMQNSH (167 aa). Asp9 serves as the catalytic Nucleophile. 2 residues coordinate Mg(2+): Asp9 and Asp11. Asp11 serves as the catalytic Proton donor. Zn(2+)-binding residues include Cys93, His95, Cys101, and Cys103. Asp130 contributes to the Mg(2+) binding site. Residues 168-357 are imidazoleglycerol-phosphate dehydratase; the sequence is RVAHIQRITN…QIPSSKGILL (190 aa).

This sequence in the N-terminal section; belongs to the histidinol-phosphatase family. The protein in the C-terminal section; belongs to the imidazoleglycerol-phosphate dehydratase family. Mg(2+) is required as a cofactor. Requires Zn(2+) as cofactor.

It localises to the cytoplasm. The enzyme catalyses D-erythro-1-(imidazol-4-yl)glycerol 3-phosphate = 3-(imidazol-4-yl)-2-oxopropyl phosphate + H2O. It carries out the reaction L-histidinol phosphate + H2O = L-histidinol + phosphate. The protein operates within amino-acid biosynthesis; L-histidine biosynthesis; L-histidine from 5-phospho-alpha-D-ribose 1-diphosphate: step 6/9. Its pathway is amino-acid biosynthesis; L-histidine biosynthesis; L-histidine from 5-phospho-alpha-D-ribose 1-diphosphate: step 8/9. In Blochmanniella floridana, this protein is Histidine biosynthesis bifunctional protein HisB.